We begin with the raw amino-acid sequence, 156 residues long: Mediator of RNA polymerase II transcription subunit 28 (156 aa).

The tract at residues 1–38 (MDYQQKPPQSSDPSPSPPDRPPGIRSPETPSNNQNNDI) is disordered. Positions 104–156 (PSRAESLKKDIAVMEEELKTKDELIKKHMRLFQESQKLVKEQIEKHRDELEKV) form a coiled coil.

It belongs to the Mediator complex subunit 28 family. Dimers. Component of the Mediator complex. Interacts with GEBPL.

The protein localises to the nucleus. Functionally, component of the Mediator complex, a coactivator involved in the regulated transcription of nearly all RNA polymerase II-dependent genes. Mediator functions as a bridge to convey information from gene-specific regulatory proteins to the basal RNA polymerase II transcription machinery. The Mediator complex, having a compact conformation in its free form, is recruited to promoters by direct interactions with regulatory proteins and serves for the assembly of a functional pre-initiation complex with RNA polymerase II and the general transcription factors. This chain is Mediator of RNA polymerase II transcription subunit 28, found in Arabidopsis thaliana (Mouse-ear cress).